We begin with the raw amino-acid sequence, 170 residues long: Cathelicidin antimicrobial peptide (170 aa).

The N-terminal stretch at 1-30 is a signal peptide; that stretch reads MKTQRDGPSLGRWSLLLLLLGLTMPLAVIG. Residues 31-131 constitute a propeptide, cathelin-like domain (CLD); it reads RVLSYQEAVL…DISCDKDKRK (101 aa). The tract at residues 31-131 is cathelin-like domain (CLD); it reads RVLSYQEAVL…DISCDKDKRK (101 aa). 2 cysteine pairs are disulfide-bonded: cysteine 86-cysteine 97 and cysteine 108-cysteine 125. Positions 150 to 162 are active core; that stretch reads LKKIGQKIKDFFG.

The protein belongs to the cathelicidin family. In terms of assembly, monomer, homodimer or homotrimer (in vitro). Oligomerizes as tetra- or hexamer in solution (in vitro). In terms of processing, proteolytically cleaved by proteinase PRTN3 into antibacterial peptide LL-37. Proteolytically cleaved by cathepsin CTSG and neutrophil elastase ELANE. Resistant to proteolytic degradation in solution, and when bound to both zwitterionic (mimicking mammalian membranes) and negatively charged membranes (mimicking bacterial membranes). Post-translationally, after secretion onto the skin surface, the CAMP gene product is processed by a serine protease-dependent mechanism into multiple novel antimicrobial peptides distinct from and shorter than cathelicidin LL-37. These peptides show enhanced antimicrobial action, acquiring the ability to kill skin pathogens such as S.aureus, E.coli and C.albicans. These peptides have lost the ability to stimulate CXCL8/IL8 release from keratinocytes. The peptides act synergistically, killing bacteria at lower concentrations when present together, and maintain activity at increased salt condition.

The protein resides in the secreted. It localises to the vesicle. Antimicrobial protein that is an integral component of the innate immune system. Binds to bacterial lipopolysaccharides (LPS). Acts via neutrophil N-formyl peptide receptors to enhance the release of CXCL2. Postsecretory processing generates multiple cathelicidin antimicrobial peptides with various lengths which act as a topical antimicrobial defense in sweat on skin. The unprocessed precursor form, cathelicidin antimicrobial peptide, inhibits the growth of Gram-negative E.coli and E.aerogenes with efficiencies comparable to that of the mature peptide LL-37 (in vitro). Functionally, antimicrobial peptide that is an integral component of the innate immune system. Binds to bacterial lipopolysaccharides (LPS). Causes membrane permeabilization by forming transmembrane pores (in vitro). Causes lysis of E.coli. Exhibits antimicrobial activity against Gram-negative bacteria such as P.aeruginosa, S.typhimurium, E.aerogenes, E.coli and P.syringae, Gram-positive bacteria such as L.monocytogenes, S.epidermidis, S.pyogenes and S.aureus, as well as vancomycin-resistant enterococci (in vitro). Exhibits antimicrobial activity against methicillin-resistant S.aureus, P.mirabilis, and C.albicans in low-salt media, but not in media containing 100 mM NaCl (in vitro). Forms chiral supramolecular assemblies with quinolone signal (PQS) molecules of P.aeruginosa, which may lead to interference of bacterial quorum signaling and perturbance of bacterial biofilm formation. May form supramolecular fiber-like assemblies on bacterial membranes. Induces cytokine and chemokine producation as well as TNF/TNFA and CSF2/GMCSF production in normal human keratinocytes. Exhibits hemolytic activity against red blood cells. Its function is as follows. Exhibits antimicrobial activity against E.coli and B.megaterium (in vitro). This is Cathelicidin antimicrobial peptide from Saguinus oedipus (Cotton-top tamarin).